We begin with the raw amino-acid sequence, 92 residues long: Small ribosomal subunit protein uS19 (92 aa).

It belongs to the universal ribosomal protein uS19 family.

Functionally, protein S19 forms a complex with S13 that binds strongly to the 16S ribosomal RNA. The polypeptide is Small ribosomal subunit protein uS19 (Albidiferax ferrireducens (strain ATCC BAA-621 / DSM 15236 / T118) (Rhodoferax ferrireducens)).